Consider the following 120-residue polypeptide: NAD(P)H-quinone oxidoreductase subunit 3, chloroplastic (120 aa).

3 helical membrane passes run 9-29 (IFWAFLIISSVIPILAFLFSG), 64-84 (MFALVFVVFDVETVFLYPWAM), and 88-108 (ILGVSVFIEALIFVLILIVGL).

This sequence belongs to the complex I subunit 3 family. As to quaternary structure, NDH is composed of at least 16 different subunits, 5 of which are encoded in the nucleus.

It is found in the plastid. It localises to the chloroplast thylakoid membrane. The enzyme catalyses a plastoquinone + NADH + (n+1) H(+)(in) = a plastoquinol + NAD(+) + n H(+)(out). It carries out the reaction a plastoquinone + NADPH + (n+1) H(+)(in) = a plastoquinol + NADP(+) + n H(+)(out). NDH shuttles electrons from NAD(P)H:plastoquinone, via FMN and iron-sulfur (Fe-S) centers, to quinones in the photosynthetic chain and possibly in a chloroplast respiratory chain. The immediate electron acceptor for the enzyme in this species is believed to be plastoquinone. Couples the redox reaction to proton translocation, and thus conserves the redox energy in a proton gradient. The polypeptide is NAD(P)H-quinone oxidoreductase subunit 3, chloroplastic (Spinacia oleracea (Spinach)).